Here is a 460-residue protein sequence, read N- to C-terminus: Mercuric reductase (460 aa).

One can recognise an HMA domain in the interval 1 to 65 (MTHLKITGMT…AVAGLGYKAM (65 aa)). A metal cation contacts are provided by C11 and C14. Positions 110, 130, and 135 each coordinate FAD. The cysteines at positions 136 and 141 are disulfide-linked. FAD is bound by residues K145 and A211. Hg(2+) is bound by residues C457 and C458.

Belongs to the class-I pyridine nucleotide-disulfide oxidoreductase family. As to quaternary structure, homodimer. Requires FAD as cofactor.

It carries out the reaction Hg + NADP(+) + H(+) = Hg(2+) + NADPH. Resistance to Hg(2+) in bacteria appears to be governed by a specialized system which includes mercuric reductase. MerA protein is responsible for volatilizing mercury as Hg(0). This chain is Mercuric reductase (merA), found in Serratia marcescens.